The chain runs to 1554 residues: Lysine-specific demethylase 5C (1554 aa).

Residues 14–55 (CPVFEPSWAEFRDPLGYIAKIRPIAEKSGICKIRPPADWQPP) form the JmjN domain. The ARID domain maps to 79 to 169 (TRVKLNYLDQ…IVYPYEMYQS (91 aa)). Over residues 197 to 207 (LRQSVQPSKFN) the composition is skewed to polar residues. A disordered region spans residues 197–227 (LRQSVQPSKFNSYGRRAKRLQPDPEPTEEDI). Glycyl lysine isopeptide (Lys-Gly) (interchain with G-Cter in SUMO2) cross-links involve residues lysine 205, lysine 229, lysine 244, and lysine 274. The segment at 284–303 (ESTSPKTFLEGKEELSHSPE) is disordered. Position 287 is a phosphoserine (serine 287). Lysine 295 is covalently cross-linked (Glycyl lysine isopeptide (Lys-Gly) (interchain with G-Cter in SUMO2)). A phosphoserine mark is found at serine 301 and serine 317. Residues 326–372 (VCRMCSRGDEDDKLLLCDGCDDNYHIFCLLPPLPEIPKGVWRCPKCV) form a PHD-type 1 zinc finger. The JmjC domain maps to 468–634 (EYATSGWNLN…AGRQCIEHYR (167 aa)). Fe cation is bound by residues histidine 514, aspartate 517, and histidine 602. Serine 893 and serine 897 each carry phosphoserine. Residue lysine 1127 forms a Glycyl lysine isopeptide (Lys-Gly) (interchain with G-Cter in SUMO2) linkage. A PHD-type 2 zinc finger spans residues 1187–1248 (ICVCGQVPAG…DTKFLCPLCM (62 aa)). Disordered stretches follow at residues 1319–1364 (SKPE…EGSG) and 1437–1535 (AERH…APFS). Position 1353 is a phosphoserine (serine 1353). Basic residues predominate over residues 1442-1457 (SRTRGRALERRRRRKV). Over residues 1458-1475 (DRGGEPDDPAREELEPKR) the composition is skewed to basic and acidic residues. Positions 1482–1497 (EAEEVQEEEELEEETG) are enriched in acidic residues.

The protein belongs to the JARID1 histone demethylase family. In terms of assembly, part of two distinct complexes, one containing E2F6, and the other containing REST. Interacts with ZMYND8. The cofactor is Fe(2+).

It is found in the nucleus. The enzyme catalyses N(6),N(6),N(6)-trimethyl-L-lysyl(4)-[histone H3] + 3 2-oxoglutarate + 3 O2 = L-lysyl(4)-[histone H3] + 3 formaldehyde + 3 succinate + 3 CO2. Its function is as follows. Histone demethylase that specifically demethylates 'Lys-4' of histone H3, thereby playing a central role in histone code. Does not demethylate histone H3 'Lys-9', H3 'Lys-27', H3 'Lys-36', H3 'Lys-79' or H4 'Lys-20'. Demethylates trimethylated and dimethylated but not monomethylated H3 'Lys-4'. Participates in transcriptional repression of neuronal genes by recruiting histone deacetylases and REST at neuron-restrictive silencer elements. Represses the CLOCK-BMAL1 heterodimer-mediated transcriptional activation of the core clock component PER2. This is Lysine-specific demethylase 5C (Kdm5c) from Mus musculus (Mouse).